A 315-amino-acid polypeptide reads, in one-letter code: 4-hydroxy-3-methylbut-2-enyl diphosphate reductase (315 aa).

Cys12 contributes to the [4Fe-4S] cluster binding site. Residues His41 and His74 each coordinate (2E)-4-hydroxy-3-methylbut-2-enyl diphosphate. Dimethylallyl diphosphate is bound by residues His41 and His74. 2 residues coordinate isopentenyl diphosphate: His41 and His74. Cys96 lines the [4Fe-4S] cluster pocket. His124 is a (2E)-4-hydroxy-3-methylbut-2-enyl diphosphate binding site. His124 lines the dimethylallyl diphosphate pocket. His124 contributes to the isopentenyl diphosphate binding site. The Proton donor role is filled by Glu126. Thr168 provides a ligand contact to (2E)-4-hydroxy-3-methylbut-2-enyl diphosphate. Cys198 is a binding site for [4Fe-4S] cluster. (2E)-4-hydroxy-3-methylbut-2-enyl diphosphate is bound by residues Ser226, Ser227, Asn228, and Ser270. Ser226, Ser227, Asn228, and Ser270 together coordinate dimethylallyl diphosphate. The isopentenyl diphosphate site is built by Ser226, Ser227, Asn228, and Ser270.

This sequence belongs to the IspH family. The cofactor is [4Fe-4S] cluster.

The enzyme catalyses isopentenyl diphosphate + 2 oxidized [2Fe-2S]-[ferredoxin] + H2O = (2E)-4-hydroxy-3-methylbut-2-enyl diphosphate + 2 reduced [2Fe-2S]-[ferredoxin] + 2 H(+). The catalysed reaction is dimethylallyl diphosphate + 2 oxidized [2Fe-2S]-[ferredoxin] + H2O = (2E)-4-hydroxy-3-methylbut-2-enyl diphosphate + 2 reduced [2Fe-2S]-[ferredoxin] + 2 H(+). The protein operates within isoprenoid biosynthesis; dimethylallyl diphosphate biosynthesis; dimethylallyl diphosphate from (2E)-4-hydroxy-3-methylbutenyl diphosphate: step 1/1. It participates in isoprenoid biosynthesis; isopentenyl diphosphate biosynthesis via DXP pathway; isopentenyl diphosphate from 1-deoxy-D-xylulose 5-phosphate: step 6/6. Functionally, catalyzes the conversion of 1-hydroxy-2-methyl-2-(E)-butenyl 4-diphosphate (HMBPP) into a mixture of isopentenyl diphosphate (IPP) and dimethylallyl diphosphate (DMAPP). Acts in the terminal step of the DOXP/MEP pathway for isoprenoid precursor biosynthesis. In Pseudomonas fluorescens (strain ATCC BAA-477 / NRRL B-23932 / Pf-5), this protein is 4-hydroxy-3-methylbut-2-enyl diphosphate reductase.